Consider the following 360-residue polypeptide: MKNIFLHSLSLENYRNFKNLELKTDNTPIILIGENGSGKTNILEAISLFYPGRGLRSAKLANVCKTSEDHCLVKALLQSKLGLAEFTTQFKRSSNRRITEYNESKIANNELSKFTSMVWLTPHMEGIFTSGSSDRRKFLDRIVYNFDPKHAELVSKYEYYMHERNKILVEDIRDDNWLKIIEEKMADISNHIANNRLKTLEFMQQAIDDLENEFPKADLSIDGIVEQKILNGKKNIVSFITAELYQTRSKDKLLGRTSFGVHKSDFLVKHQKKNILAKFCSTGEQKAILIAIILAEMNYAIKLTKIAPILLLDEVFVHLDDKRRQYLIEFLIGLNMQLWVTTTNLEGIENFATKAQLIKL.

33-40 (GENGSGKT) lines the ATP pocket.

It belongs to the RecF family.

Its subcellular location is the cytoplasm. Its function is as follows. The RecF protein is involved in DNA metabolism; it is required for DNA replication and normal SOS inducibility. RecF binds preferentially to single-stranded, linear DNA. It also seems to bind ATP. The chain is DNA replication and repair protein RecF from Rickettsia africae (strain ESF-5).